The chain runs to 76 residues: Small ribosomal subunit protein bS18 (76 aa).

Belongs to the bacterial ribosomal protein bS18 family. Part of the 30S ribosomal subunit. Forms a tight heterodimer with protein bS6.

Its function is as follows. Binds as a heterodimer with protein bS6 to the central domain of the 16S rRNA, where it helps stabilize the platform of the 30S subunit. The protein is Small ribosomal subunit protein bS18 of Stenotrophomonas maltophilia (strain R551-3).